The following is a 114-amino-acid chain: Transcription initiation factor IIB (114 aa).

2 repeat units span residues 1–17 (VEQK…AQEL) and 28–109 (QYVP…EQIE).

It belongs to the TFIIB family.

Its function is as follows. Stabilizes TBP binding to an archaeal box-A promoter. Also responsible for recruiting RNA polymerase II to the pre-initiation complex (DNA-TBP-TFIIB). The chain is Transcription initiation factor IIB (tfb) from Haloarcula vallismortis (Halobacterium vallismortis).